The following is a 206-amino-acid chain: Small ribosomal subunit protein uS4 (206 aa).

The region spanning 96-156 (TRLDNVVYRM…EKSQKQARIK (61 aa)) is the S4 RNA-binding domain.

It belongs to the universal ribosomal protein uS4 family. As to quaternary structure, part of the 30S ribosomal subunit. Contacts protein S5. The interaction surface between S4 and S5 is involved in control of translational fidelity.

One of the primary rRNA binding proteins, it binds directly to 16S rRNA where it nucleates assembly of the body of the 30S subunit. In terms of biological role, with S5 and S12 plays an important role in translational accuracy. In Shewanella loihica (strain ATCC BAA-1088 / PV-4), this protein is Small ribosomal subunit protein uS4.